Consider the following 433-residue polypeptide: MVNVVLGSQWGDEGKGKLVDLLVGKYDIVARCAGGNNAGHTIVVNGVKYDFHMLPSGLVNPNCQNLLGNGVVIHVPSFFKELETLEAKGLKNARSRLFVSSRAHLVFDFHQVTDKLRELELSGRSKDGKNIGTTGKGIGPTYSTKASRSGLRVHHLVNDQPGAWEEFVARYKRLLETRRQRYGDFEYDFEAKLAEYKKLREQLKPFVVDSVVFMHNAIEAKKKILVEGANALMLDIDFGTYPYVTSSNTGIGGVLTGLGIPPRTIDEIYGVVKAYTTRVGEGPFPTEQLNENGEKLQTIGAEFGVTTGRKRRCGWLDLVVLKYSTLINGYTSLNITKLDVLDTFKEIPVGISYSIQGKKLDLFPEDLNILGKVEVEYKVLPGWDQDITKITKYEDLPENAKKYLKYIEDFVGVPVEWVGTGPARESMLHKEIK.

GTP is bound by residues 11-17 and 39-41; these read GDEGKGK and GHT. Asp-12 serves as the catalytic Proton acceptor. Asp-12 and Gly-39 together coordinate Mg(2+). Residues 12–15, 37–40, Thr-134, Arg-148, Asn-230, Thr-245, and Arg-309 each bind IMP; these read DEGK and NAGH. His-40 acts as the Proton donor in catalysis. 305–311 contributes to the substrate binding site; sequence VTTGRKR. GTP is bound by residues Arg-311, 337–339, and 419–421; these read KLD and GTG.

Belongs to the adenylosuccinate synthetase family. As to quaternary structure, homodimer. Mg(2+) is required as a cofactor.

Its subcellular location is the cytoplasm. The catalysed reaction is IMP + L-aspartate + GTP = N(6)-(1,2-dicarboxyethyl)-AMP + GDP + phosphate + 2 H(+). It participates in purine metabolism; AMP biosynthesis via de novo pathway; AMP from IMP: step 1/2. Plays an important role in the de novo pathway and in the salvage pathway of purine nucleotide biosynthesis. Catalyzes the first committed step in the biosynthesis of AMP from IMP. The protein is Adenylosuccinate synthetase of Saccharomyces cerevisiae (strain YJM789) (Baker's yeast).